The chain runs to 160 residues: Transcription elongation factor GreA (160 aa).

Positions 14-38 (IKAELASLKKERPEVIKAIAEAREE) form a coiled coil.

It belongs to the GreA/GreB family.

Its function is as follows. Necessary for efficient RNA polymerase transcription elongation past template-encoded arresting sites. The arresting sites in DNA have the property of trapping a certain fraction of elongating RNA polymerases that pass through, resulting in locked ternary complexes. Cleavage of the nascent transcript by cleavage factors such as GreA or GreB allows the resumption of elongation from the new 3'terminus. GreA releases sequences of 2 to 3 nucleotides. The chain is Transcription elongation factor GreA from Maridesulfovibrio salexigens (strain ATCC 14822 / DSM 2638 / NCIMB 8403 / VKM B-1763) (Desulfovibrio salexigens).